The chain runs to 281 residues: LC-AMP precursor 3 (281 aa).

Residues 1 to 19 (MKYTIIPFLLLVALTCATA) form the signal peptide. A propeptide spanning residues 20 to 56 (RSIDGSEKEVQEIREETPSSNEDVPFSLSANEDEEAR) is cleaved from the precursor. Leucine amide is present on Leu-74. The propeptide occupies 75–89 (GREESLSANEDEEAR). Ser-114 is modified (serine amide). The propeptide occupies 115–129 (GREESFSANEDEEER). Leu-147 is subject to Leucine amide. A propeptide spanning residues 148-162 (GREESISANEDEETR) is cleaved from the precursor. Leu-180 carries the leucine amide modification. Residues 181-195 (GREESLSAIEDEEAR) constitute a propeptide that is removed on maturation. The residue at position 213 (Leu-213) is a Leucine amide. The propeptide occupies 214 to 228 (GREESLSANEDEEAR). Leu-246 carries the leucine amide modification. The propeptide occupies 247–261 (GREESLSANEDEEAR). Leu-279 bears the Leucine amide mark.

Expressed by the venom gland.

It localises to the secreted. In terms of biological role, antimicrobial peptide that acts by influencing bacterial cell membrane permeability at low concentrations and by directly disrupting structure-function at high concentrations. Shows activity against Gram-negative bacteria (S.typhimurium CGMCC 1.1174 (MIC=2.5 uM), E.coli CCTCC AB 2018675 (MIC=5 uM), S.dysenteriae CGMCC 1.1869 (MIC=2.5 uM), P.aeruginosa CGMCC 1.596 (MIC 5-10 uM), K.pneumoniae (MIC=10 uM), A.baumannii (MIC=5-10 uM)), and Gram-positive bacteria (S.aureus CMCC 26003 or MRSA ATCC 43300 (MIC=5 uM), and E.faecium (MIC=2.5-5 uM)). Inhibits biofilm formation of E.coli and S.aureus in a dose-dependent manner and disrupts established biofilms. Demonstrates minimal bacterial resistance, excellent stability, negligible mammalian cell toxicity, low hemolytic activity, and appropriate selectivity for both normal and tumor cells. When combined with traditional antibiotics, exhibits additive or synergistic therapeutic effects. In vivo, in a neutropenic mouse thigh infection model, exhibits a therapeutic effect in inhibiting bacterial proliferation. The protein is LC-AMP precursor 3 of Lycosa coelestis (Wolf spider).